A 147-amino-acid polypeptide reads, in one-letter code: uncharacterized protein (147 aa).

A disordered region spans residues 110–133 (VLEPPTPSQPAPTPEPAVKPQPIA). The span at 113 to 128 (PPTPSQPAPTPEPAVK) shows a compositional bias: pro residues.

This is an uncharacterized protein from Ictalurid herpesvirus 1 (strain Auburn) (IcHV-1).